A 189-amino-acid polypeptide reads, in one-letter code: Probable chorismate pyruvate-lyase (189 aa).

Substrate is bound by residues Arg74, Leu113, and Glu175.

The protein belongs to the UbiC family.

It localises to the cytoplasm. The catalysed reaction is chorismate = 4-hydroxybenzoate + pyruvate. The protein operates within cofactor biosynthesis; ubiquinone biosynthesis. Functionally, removes the pyruvyl group from chorismate, with concomitant aromatization of the ring, to provide 4-hydroxybenzoate (4HB) for the ubiquinone pathway. This Azoarcus sp. (strain BH72) protein is Probable chorismate pyruvate-lyase.